The following is a 409-amino-acid chain: Multidrug resistance protein MdtG (409 aa).

The next 10 membrane-spanning stretches (helical) occupy residues 16-36 (LIVA…VMPF), 58-78 (IVFS…GGLA), 92-112 (LGMG…QFLI), 115-135 (ALLG…ATQV), 146-166 (TLST…GLLA), 173-193 (PVFF…LFCI), 224-244 (LFVT…ILTL), 256-276 (VAFI…LLSA), 291-311 (ILIT…YVQT), and 379-399 (AVFL…WNSL).

It belongs to the major facilitator superfamily. DHA1 family. MdtG (TC 2.A.1.2.20) subfamily.

It is found in the cell inner membrane. Its function is as follows. Confers resistance to fosfomycin and deoxycholate. This is Multidrug resistance protein MdtG from Escherichia coli O9:H4 (strain HS).